Consider the following 384-residue polypeptide: NADP-dependent alcohol dehydrogenase 3 (384 aa).

It belongs to the iron-containing alcohol dehydrogenase family.

The catalysed reaction is a primary alcohol + NADP(+) = an aldehyde + NADPH + H(+). Has NADP-dependent alcohol dehydrogenase activity. The chain is NADP-dependent alcohol dehydrogenase 3 from Entamoeba histolytica (strain ATCC 30459 / HM-1:IMSS / ABRM).